A 327-amino-acid chain; its full sequence is Succinylglutamate desuccinylase (327 aa).

The Zn(2+) site is built by histidine 53, glutamate 56, and histidine 146. Glutamate 209 is an active-site residue.

It belongs to the AspA/AstE family. Succinylglutamate desuccinylase subfamily. Zn(2+) is required as a cofactor.

The enzyme catalyses N-succinyl-L-glutamate + H2O = L-glutamate + succinate. It functions in the pathway amino-acid degradation; L-arginine degradation via AST pathway; L-glutamate and succinate from L-arginine: step 5/5. Its function is as follows. Transforms N(2)-succinylglutamate into succinate and glutamate. The protein is Succinylglutamate desuccinylase of Serratia proteamaculans (strain 568).